Here is a 453-residue protein sequence, read N- to C-terminus: UPF0210 protein Mbar_A3181 (453 aa).

The protein belongs to the UPF0210 family.

This chain is UPF0210 protein Mbar_A3181, found in Methanosarcina barkeri (strain Fusaro / DSM 804).